Reading from the N-terminus, the 83-residue chain is Small ribosomal subunit protein bS16 (83 aa).

The protein belongs to the bacterial ribosomal protein bS16 family.

In Acinetobacter baumannii (strain AB307-0294), this protein is Small ribosomal subunit protein bS16.